The primary structure comprises 185 residues: Peptidyl-tRNA hydrolase (185 aa).

TRNA is bound at residue Tyr14. Residue His19 is the Proton acceptor of the active site. Residues Tyr65, Asn67, and Asn113 each contribute to the tRNA site.

Belongs to the PTH family. As to quaternary structure, monomer.

Its subcellular location is the cytoplasm. The enzyme catalyses an N-acyl-L-alpha-aminoacyl-tRNA + H2O = an N-acyl-L-amino acid + a tRNA + H(+). Its function is as follows. Hydrolyzes ribosome-free peptidyl-tRNAs (with 1 or more amino acids incorporated), which drop off the ribosome during protein synthesis, or as a result of ribosome stalling. Functionally, catalyzes the release of premature peptidyl moieties from peptidyl-tRNA molecules trapped in stalled 50S ribosomal subunits, and thus maintains levels of free tRNAs and 50S ribosomes. The sequence is that of Peptidyl-tRNA hydrolase from Rickettsia typhi (strain ATCC VR-144 / Wilmington).